We begin with the raw amino-acid sequence, 946 residues long: Protein translocase subunit SecA (946 aa).

ATP is bound by residues Gln-87, 105–109 (GEGKT), and Asp-524. Residues 905–926 (APASDAAQRDPKNPASWGKIGR) form a disordered region. The Zn(2+) site is built by Cys-930, Cys-932, Cys-941, and His-942.

The protein belongs to the SecA family. In terms of assembly, monomer and homodimer. Part of the essential Sec protein translocation apparatus which comprises SecA, SecYEG and auxiliary proteins SecDF-YajC and YidC. Requires Zn(2+) as cofactor.

It localises to the cell inner membrane. The protein resides in the cytoplasm. It carries out the reaction ATP + H2O + cellular proteinSide 1 = ADP + phosphate + cellular proteinSide 2.. Its function is as follows. Part of the Sec protein translocase complex. Interacts with the SecYEG preprotein conducting channel. Has a central role in coupling the hydrolysis of ATP to the transfer of proteins into and across the cell membrane, serving both as a receptor for the preprotein-SecB complex and as an ATP-driven molecular motor driving the stepwise translocation of polypeptide chains across the membrane. This chain is Protein translocase subunit SecA, found in Bradyrhizobium diazoefficiens (strain JCM 10833 / BCRC 13528 / IAM 13628 / NBRC 14792 / USDA 110).